The following is a 97-amino-acid chain: Ig heavy chain V region 914 (97 aa).

The 97-residue stretch at 1–97 folds into the Ig-like domain; that stretch reads EVKLVESGGG…EDTAMYYCAR (97 aa).

The polypeptide is Ig heavy chain V region 914 (Mus musculus (Mouse)).